The chain runs to 423 residues: Serine--tRNA ligase (423 aa).

Position 229 to 231 (229 to 231) interacts with L-serine; that stretch reads TAE. 260 to 262 contacts ATP; that stretch reads RKE. Glu283 provides a ligand contact to L-serine. 347 to 350 is an ATP binding site; that stretch reads EISS. Ser383 provides a ligand contact to L-serine.

It belongs to the class-II aminoacyl-tRNA synthetase family. Type-1 seryl-tRNA synthetase subfamily. As to quaternary structure, homodimer. The tRNA molecule binds across the dimer.

Its subcellular location is the cytoplasm. The enzyme catalyses tRNA(Ser) + L-serine + ATP = L-seryl-tRNA(Ser) + AMP + diphosphate + H(+). It carries out the reaction tRNA(Sec) + L-serine + ATP = L-seryl-tRNA(Sec) + AMP + diphosphate + H(+). It functions in the pathway aminoacyl-tRNA biosynthesis; selenocysteinyl-tRNA(Sec) biosynthesis; L-seryl-tRNA(Sec) from L-serine and tRNA(Sec): step 1/1. Its function is as follows. Catalyzes the attachment of serine to tRNA(Ser). Is also able to aminoacylate tRNA(Sec) with serine, to form the misacylated tRNA L-seryl-tRNA(Sec), which will be further converted into selenocysteinyl-tRNA(Sec). This is Serine--tRNA ligase from Syntrophotalea carbinolica (strain DSM 2380 / NBRC 103641 / GraBd1) (Pelobacter carbinolicus).